A 381-amino-acid polypeptide reads, in one-letter code: Queuine tRNA-ribosyltransferase (381 aa).

D90 acts as the Proton acceptor in catalysis. Substrate-binding positions include D90–F94, D144, Q193, and G221. An RNA binding region spans residues G252–N258. Catalysis depends on D271, which acts as the Nucleophile. Residues T276 to R280 form an RNA binding; important for wobble base 34 recognition region. The Zn(2+) site is built by C309, C311, C314, and H340.

This sequence belongs to the queuine tRNA-ribosyltransferase family. Homodimer. Within each dimer, one monomer is responsible for RNA recognition and catalysis, while the other monomer binds to the replacement base PreQ1. It depends on Zn(2+) as a cofactor.

It catalyses the reaction 7-aminomethyl-7-carbaguanine + guanosine(34) in tRNA = 7-aminomethyl-7-carbaguanosine(34) in tRNA + guanine. The protein operates within tRNA modification; tRNA-queuosine biosynthesis. In terms of biological role, catalyzes the base-exchange of a guanine (G) residue with the queuine precursor 7-aminomethyl-7-deazaguanine (PreQ1) at position 34 (anticodon wobble position) in tRNAs with GU(N) anticodons (tRNA-Asp, -Asn, -His and -Tyr). Catalysis occurs through a double-displacement mechanism. The nucleophile active site attacks the C1' of nucleotide 34 to detach the guanine base from the RNA, forming a covalent enzyme-RNA intermediate. The proton acceptor active site deprotonates the incoming PreQ1, allowing a nucleophilic attack on the C1' of the ribose to form the product. After dissociation, two additional enzymatic reactions on the tRNA convert PreQ1 to queuine (Q), resulting in the hypermodified nucleoside queuosine (7-(((4,5-cis-dihydroxy-2-cyclopenten-1-yl)amino)methyl)-7-deazaguanosine). The polypeptide is Queuine tRNA-ribosyltransferase (Helicobacter hepaticus (strain ATCC 51449 / 3B1)).